A 235-amino-acid polypeptide reads, in one-letter code: Ribonuclease HII (235 aa).

The region spanning 23 to 212 (GLVAGVDEAG…VAHVVSIARM (190 aa)) is the RNase H type-2 domain. 3 residues coordinate a divalent metal cation: Asp29, Glu30, and Asp121.

It belongs to the RNase HII family. The cofactor is Mn(2+). Mg(2+) serves as cofactor.

It is found in the cytoplasm. It catalyses the reaction Endonucleolytic cleavage to 5'-phosphomonoester.. Its function is as follows. Endonuclease that specifically degrades the RNA of RNA-DNA hybrids. The polypeptide is Ribonuclease HII (Delftia acidovorans (strain DSM 14801 / SPH-1)).